The following is a 527-amino-acid chain: Matrix metalloproteinase-19 (527 aa).

A signal peptide spans 1–18 (MDWQQLWLAFLLPMTVSG). Residues 19–98 (RALGPTEKEA…EDPFNQKSLK (80 aa)) constitute a propeptide that is removed on maturation. The Cysteine switch signature appears at 84 to 91 (PRCGLEDP). A Zn(2+)-binding site is contributed by C86. N-linked (GlcNAc...) asparagine glycosylation is present at N109. Residue H213 coordinates Zn(2+). Residue E214 is part of the active site. Zn(2+)-binding residues include H217 and H223. 4 Hemopexin repeats span residues 286 to 333 (PNPC…WEGL), 334 to 372 (PGNLDAAVYSPRTRRTHFFKGNKVWRYVDFKMSPGFPMK), 377 to 425 (EPNL…FTGV), and 426 to 471 (PDRP…WMHC). A disulfide bond links C289 and C471. 2 N-linked (GlcNAc...) asparagine glycosylation sites follow: N464 and N479. A disordered region spans residues 473–500 (SQTPDTNSSTGDVTPSTTDTVLGTTPST). D512 is lipidated: GPI-anchor amidated aspartate. A propeptide spans 513-527 (SASLSFSANVTLLGA) (removed in mature form). N521 carries N-linked (GlcNAc...) asparagine glycosylation.

It belongs to the peptidase M10A family. Zn(2+) is required as a cofactor. It depends on Ca(2+) as a cofactor. In terms of processing, activated by autolytic cleavage after Lys-98. Post-translationally, tyrosine phosphorylated by PKDCC/VLK. In terms of tissue distribution, highly expressed in the liver. Expressed in the arterial tunica media of large blood vessels.

It is found in the cell membrane. The protein resides in the secreted. Its subcellular location is the extracellular space. It localises to the extracellular matrix. In terms of biological role, endopeptidase that degrades various components of the extracellular matrix, such as aggrecan and cartilage oligomeric matrix protein (comp), during development, haemostasis and pathological conditions (arthritic disease). May also play a role in neovascularization or angiogenesis. Hydrolyzes collagen type IV, laminin, nidogen, nascin-C isoform, fibronectin, and type I gelatin. This chain is Matrix metalloproteinase-19 (Mmp19), found in Mus musculus (Mouse).